The primary structure comprises 1045 residues: FERM, ARHGEF and pleckstrin domain-containing protein 1 (1045 aa).

Positions 1-37 (MGEIEQRPTPGSRLGAPENSGISTLERGQKPPPTPSG) are disordered. A phosphoserine mark is found at serine 20 and serine 23. Position 24 is a phosphothreonine (threonine 24). Residues 40-320 (VSIKIQMLDD…EHHAFFRLFE (281 aa)) enclose the FERM domain. A phosphoserine mark is found at serine 340, serine 373, serine 389, serine 403, serine 418, serine 427, and serine 433. A disordered region spans residues 361–534 (FERKHSKIHS…TDDEDEGRRK (174 aa)). The span at 373-396 (SLASQPTELNSEVLEQSQQSTSLT) shows a compositional bias: polar residues. Polar residues-rich tracts occupy residues 471–489 (TGSLTGSPHLSELSVNSQG) and 496–511 (VTLSPNLSPDTKQASP). Residues serine 510 and serine 514 each carry the phosphoserine modification. The DH domain maps to 540–730 (KAYFIAKEVS…TEMVAQLHGT (191 aa)). Positions 759 to 856 (EFIRLGSLSK…WVEDIQMAID (98 aa)) constitute a PH 1 domain. Residues serine 833, serine 872, and serine 878 each carry the phosphoserine modification. The tract at residues 864–903 (PAPEFLASSPPDNKSPDEATAADQESEDDLSASRTSLERQ) is disordered. At threonine 883 the chain carries Phosphothreonine. Phosphoserine is present on residues serine 889, serine 896, and serine 899. The region spanning 932–1029 (ENQLSGNLLR…WMEVIRSATS (98 aa)) is the PH 2 domain.

As to quaternary structure, interacts with CADM1. Interacts with RAC1. Detected in cAMP-treated chondrocytes, but not in untreated chondrocytes. Detected in fetal brain, heart and spleen, and in adult testis, kidney and lung.

The protein localises to the cell membrane. The protein resides in the synapse. Its subcellular location is the synaptosome. It localises to the cytoplasm. It is found in the cytosol. The protein localises to the cell projection. The protein resides in the filopodium. Its subcellular location is the dendrite. It localises to the dendritic spine. In terms of biological role, functions as a guanine nucleotide exchange factor for RAC1. May play a role in semaphorin signaling. Plays a role in the assembly and disassembly of dendritic filopodia, the formation of dendritic spines, regulation of dendrite length and ultimately the formation of synapses. In Homo sapiens (Human), this protein is FERM, ARHGEF and pleckstrin domain-containing protein 1 (FARP1).